Here is an 80-residue protein sequence, read N- to C-terminus: Conotoxin SIVB (80 aa).

The first 21 residues, 1–21, serve as a signal peptide directing secretion; it reads MGMRMMFTVFLSVVLATTVVS. Positions 22–38 are excised as a propeptide; sequence TPSDRASDGRNAAVHER. The residue at position 39 (Q39) is a Pyrrolidone carboxylic acid. A glycan (O-linked (HexNAc...) serine) is linked at S45. 4-hydroxyproline is present on residues P55, P60, P61, P69, P72, and P75. Proline amide is present on P75. The propeptide occupies 76–80; that stretch reads GRRND.

Belongs to the conotoxin A superfamily. Post-translationally, contains 3 disulfide bonds. O-linked glycan consists of Hex3-HexNAc2 pentasaccharide. Expressed by the venom duct.

The protein localises to the secreted. Neurotoxin with probable activity on sodium channel. Induces intense repetitive firing of the frog neuromuscular junction, leading to a tetanic contracture in muscle fiber (spastic paralysis). In vivo, shows the same effect as the whole venom when injected on fish prey. The polypeptide is Conotoxin SIVB (Conus striatus (Striated cone)).